Here is a 597-residue protein sequence, read N- to C-terminus: uncharacterized protein (597 aa).

Residues 378–575 enclose the VWFA domain; that stretch reads EVSFVVDNSG…YLPRELLRTL (198 aa).

This is an uncharacterized protein from Treponema pallidum (strain Nichols).